A 141-amino-acid polypeptide reads, in one-letter code: Nucleoside diphosphate kinase (141 aa).

Residues Lys11, Phe59, Arg87, Thr93, Arg104, and Asn114 each contribute to the ATP site. His117 acts as the Pros-phosphohistidine intermediate in catalysis.

The protein belongs to the NDK family. Homotetramer. Mg(2+) serves as cofactor.

The protein localises to the cytoplasm. It carries out the reaction a 2'-deoxyribonucleoside 5'-diphosphate + ATP = a 2'-deoxyribonucleoside 5'-triphosphate + ADP. It catalyses the reaction a ribonucleoside 5'-diphosphate + ATP = a ribonucleoside 5'-triphosphate + ADP. Its function is as follows. Major role in the synthesis of nucleoside triphosphates other than ATP. The ATP gamma phosphate is transferred to the NDP beta phosphate via a ping-pong mechanism, using a phosphorylated active-site intermediate. The sequence is that of Nucleoside diphosphate kinase from Xylella fastidiosa (strain 9a5c).